The sequence spans 200 residues: Phospholipase D (200 aa).

Positions 1–25 (MKRKNNKFIEISIAFILGVALGIYG) are cleaved as a signal peptide. Positions 142-169 (VPGIAHNKVIIIDRKKVITGSFNFTAAA) constitute a PLD phosphodiesterase domain. Catalysis depends on residues His147, Lys149, and Asp154.

It belongs to the phospholipase D family. Homodimer.

The protein resides in the secreted. It carries out the reaction a 1,2-diacyl-sn-glycero-3-phosphocholine + H2O = a 1,2-diacyl-sn-glycero-3-phosphate + choline + H(+). Functionally, could be a virulence factor. This chain is Phospholipase D (pld), found in Rickettsia felis (strain ATCC VR-1525 / URRWXCal2) (Rickettsia azadi).